The primary structure comprises 398 residues: Bifunctional enzyme IspD/IspF (398 aa).

The interval 1 to 237 (MSISIAAIIL…QKKMQMFPDI (237 aa)) is 2-C-methyl-D-erythritol 4-phosphate cytidylyltransferase. The tract at residues 238–398 (RVGNGYDVHS…SVLYPGEIPQ (161 aa)) is 2-C-methyl-D-erythritol 2,4-cyclodiphosphate synthase. A divalent metal cation contacts are provided by Asp244 and His246. 4-CDP-2-C-methyl-D-erythritol 2-phosphate contacts are provided by residues 244–246 (DVH) and 270–271 (HS). His278 is an a divalent metal cation binding site. 4-CDP-2-C-methyl-D-erythritol 2-phosphate is bound by residues 292–294 (DIG), 368–371 (TTNE), Phe375, and Arg378.

In the N-terminal section; belongs to the IspD/TarI cytidylyltransferase family. IspD subfamily. This sequence in the C-terminal section; belongs to the IspF family. The cofactor is a divalent metal cation.

The enzyme catalyses 2-C-methyl-D-erythritol 4-phosphate + CTP + H(+) = 4-CDP-2-C-methyl-D-erythritol + diphosphate. It catalyses the reaction 4-CDP-2-C-methyl-D-erythritol 2-phosphate = 2-C-methyl-D-erythritol 2,4-cyclic diphosphate + CMP. It functions in the pathway isoprenoid biosynthesis; isopentenyl diphosphate biosynthesis via DXP pathway; isopentenyl diphosphate from 1-deoxy-D-xylulose 5-phosphate: step 2/6. The protein operates within isoprenoid biosynthesis; isopentenyl diphosphate biosynthesis via DXP pathway; isopentenyl diphosphate from 1-deoxy-D-xylulose 5-phosphate: step 4/6. Functionally, bifunctional enzyme that catalyzes the formation of 4-diphosphocytidyl-2-C-methyl-D-erythritol from CTP and 2-C-methyl-D-erythritol 4-phosphate (MEP) (IspD), and catalyzes the conversion of 4-diphosphocytidyl-2-C-methyl-D-erythritol 2-phosphate (CDP-ME2P) to 2-C-methyl-D-erythritol 2,4-cyclodiphosphate (ME-CPP) with a corresponding release of cytidine 5-monophosphate (CMP) (IspF). The polypeptide is Bifunctional enzyme IspD/IspF (Bartonella tribocorum (strain CIP 105476 / IBS 506)).